The sequence spans 437 residues: MQVSVENTSALERRMTIAVPAERVENEVNKRLQQTAKRAKIAGFRPGKVPMTVIRQRFEADARQEAFGDLVQASFYEAIVEQKLNPAGAPAVEPKSFEKGKDLEFVAIFEVFPEFTVAGLESIKVERLSAEVADSDLDNMLEVLRKQNTRFEAVERAAQNDDQVNIDFVGKVDGEAFAGGSAKGTLLVLGSGRMIPGFEEGLVGAKAGEERVVNVTFPEDYQNLDLAGKAAEFTITVNSVSAPVLPELNEAFFAQFGIKESTLEGFRAEVRKNMERELRQAIKTKVKNQVMDGLLAANPIEVPKALLENEVNRLRVQAVQQFGGNIKPEQLPVELFEEQAKRRVVLGLIVAEVVKQFELKPDDAKVREMIEEMASAYQEPEQVIAWYYKNDQQLNEVRSVVLEEQVVDTVLQKATVTDKSVSYEEAVKPAEAPAAAE.

Positions 161–246 (DDQVNIDFVG…VNSVSAPVLP (86 aa)) constitute a PPIase FKBP-type domain.

The protein belongs to the FKBP-type PPIase family. Tig subfamily.

Its subcellular location is the cytoplasm. It catalyses the reaction [protein]-peptidylproline (omega=180) = [protein]-peptidylproline (omega=0). Involved in protein export. Acts as a chaperone by maintaining the newly synthesized protein in an open conformation. Functions as a peptidyl-prolyl cis-trans isomerase. The sequence is that of Trigger factor from Pseudomonas putida (strain ATCC 700007 / DSM 6899 / JCM 31910 / BCRC 17059 / LMG 24140 / F1).